We begin with the raw amino-acid sequence, 330 residues long: Aspartate--ammonia ligase (330 aa).

Belongs to the class-II aminoacyl-tRNA synthetase family. AsnA subfamily.

Its subcellular location is the cytoplasm. It carries out the reaction L-aspartate + NH4(+) + ATP = L-asparagine + AMP + diphosphate + H(+). The protein operates within amino-acid biosynthesis; L-asparagine biosynthesis; L-asparagine from L-aspartate (ammonia route): step 1/1. This chain is Aspartate--ammonia ligase, found in Escherichia coli O7:K1 (strain IAI39 / ExPEC).